A 290-amino-acid chain; its full sequence is Inactive tau-tubulin kinase ttbk-6 (290 aa).

Residues Met1 to Ile240 form the Protein kinase domain. Disordered stretches follow at residues Ser244 to Glu263 and Arg268 to Leu290.

Belongs to the protein kinase superfamily. CK1 Ser/Thr protein kinase family.

This Caenorhabditis elegans protein is Inactive tau-tubulin kinase ttbk-6.